Reading from the N-terminus, the 66-residue chain is Ranalexin (66 aa).

The N-terminal stretch at 1-20 is a signal peptide; it reads MFTLKKSLLLLFFLGTINLS. A propeptide spans 21-44 (small acidic peptide); that stretch reads LCEEERNAEEERRDNPDERDVEVE. The cysteines at positions 60 and 66 are disulfide-linked.

Belongs to the frog skin active peptide (FSAP) family. Brevinin subfamily. As to expression, expressed by the skin dorsal glands.

It localises to the secreted. Potent microbicidal activity, active against S.aureus and E.coli. It also acts as a membrane-disruptive agent at higher concentrations. The protein is Ranalexin of Aquarana catesbeiana (American bullfrog).